Consider the following 157-residue polypeptide: Transcriptional repressor NrdR (157 aa).

Residues 3–34 (CPFCGHEDTQVKDSRPTDDGTAIRRRRSCTAC) fold into a zinc finger. Residues 49 to 139 (LIVVKTDQRR…VYRNFSDAGD (91 aa)) form the ATP-cone domain.

This sequence belongs to the NrdR family. It depends on Zn(2+) as a cofactor.

In terms of biological role, negatively regulates transcription of bacterial ribonucleotide reductase nrd genes and operons by binding to NrdR-boxes. The polypeptide is Transcriptional repressor NrdR (Granulibacter bethesdensis (strain ATCC BAA-1260 / CGDNIH1)).